The chain runs to 258 residues: uncharacterized protein (258 aa).

The helical transmembrane segment at 163-187 (GIVGAAGLMLMFADLNGIPGICLMG) threads the bilayer.

The protein resides in the membrane. This is an uncharacterized protein from Methanocaldococcus jannaschii (strain ATCC 43067 / DSM 2661 / JAL-1 / JCM 10045 / NBRC 100440) (Methanococcus jannaschii).